Consider the following 916-residue polypeptide: Protein translocase subunit SecA (916 aa).

Residues Q87, 105–109 (GEGKT), and D512 contribute to the ATP site. The tract at residues 857–916 (QHAEAPSMEQAVAGEDEELPEGPAPVVPLEPVRNEQKIGRNEPCPCGSGKKYKHCHGQLD) is disordered. C900, C902, C911, and H912 together coordinate Zn(2+). Over residues 906–916 (KKYKHCHGQLD) the composition is skewed to basic residues.

This sequence belongs to the SecA family. As to quaternary structure, monomer and homodimer. Part of the essential Sec protein translocation apparatus which comprises SecA, SecYEG and auxiliary proteins SecDF-YajC and YidC. Zn(2+) serves as cofactor.

It is found in the cell inner membrane. The protein resides in the cytoplasm. It carries out the reaction ATP + H2O + cellular proteinSide 1 = ADP + phosphate + cellular proteinSide 2.. Part of the Sec protein translocase complex. Interacts with the SecYEG preprotein conducting channel. Has a central role in coupling the hydrolysis of ATP to the transfer of proteins into and across the cell membrane, serving both as a receptor for the preprotein-SecB complex and as an ATP-driven molecular motor driving the stepwise translocation of polypeptide chains across the membrane. The protein is Protein translocase subunit SecA of Pseudomonas paraeruginosa (strain DSM 24068 / PA7) (Pseudomonas aeruginosa (strain PA7)).